A 367-amino-acid chain; its full sequence is Homoserine O-acetyltransferase (367 aa).

In terms of domain architecture, AB hydrolase-1 spans 41–339 (NLIVLEHALT…PVGHDAFLTE (299 aa)). Ser136 acts as the Nucleophile in catalysis. Arg205 contacts substrate. Residues Asp303 and His333 contribute to the active site. Asp334 is a binding site for substrate.

It belongs to the AB hydrolase superfamily. MetX family. Homodimer.

It localises to the cytoplasm. It catalyses the reaction L-homoserine + acetyl-CoA = O-acetyl-L-homoserine + CoA. It functions in the pathway amino-acid biosynthesis; L-methionine biosynthesis via de novo pathway; O-acetyl-L-homoserine from L-homoserine: step 1/1. Transfers an acetyl group from acetyl-CoA to L-homoserine, forming acetyl-L-homoserine. The chain is Homoserine O-acetyltransferase from Corynebacterium diphtheriae (strain ATCC 700971 / NCTC 13129 / Biotype gravis).